A 111-amino-acid polypeptide reads, in one-letter code: MNAHKERLESNLLELLQEALAGLNDGELNSLSVTKVECSKGKHHALVFVLSSDHKILSKLKKAEGLIRQFVLQASGWFKCPKLSFVLDNSLEKQLRLDAIFNEIAKGKDND.

This sequence belongs to the RbfA family. Monomer. Binds 30S ribosomal subunits, but not 50S ribosomal subunits or 70S ribosomes.

It is found in the cytoplasm. One of several proteins that assist in the late maturation steps of the functional core of the 30S ribosomal subunit. Associates with free 30S ribosomal subunits (but not with 30S subunits that are part of 70S ribosomes or polysomes). Required for efficient processing of 16S rRNA. May interact with the 5'-terminal helix region of 16S rRNA. The polypeptide is Ribosome-binding factor A (Helicobacter pylori (strain P12)).